Here is a 329-residue protein sequence, read N- to C-terminus: Transcription factor MYB2 (329 aa).

HTH myb-type domains are found at residues glycine 17–leucine 69 and arginine 70–alanine 124. DNA-binding regions (H-T-H motif) lie at residues tryptophan 45–leucine 69 and tryptophan 97–valine 120. Low complexity-rich tracts occupy residues alanine 155–glycine 166 and leucine 217–alanine 235. Disordered stretches follow at residues alanine 155–proline 189 and glycine 206–glutamine 242.

Highly expressed in leaves. Expressed in roots and shoots. Expressed at low levels in flowers.

It is found in the nucleus. In terms of biological role, transcription factor involved in abiotic stress responses. Plays a regulatory role in tolerance to salt, cold, and drought stresses. Positively regulates the expression of genes involved in proline synthesis and transport, and genes involved in reactive oxygen species (ROS) scavenging such as peroxidase, superoxide dismutase and catalase during salt stress. Transactivates stress-related genes, including LEA3, RAB16A and DREB2A during salt stress. In Oryza sativa subsp. japonica (Rice), this protein is Transcription factor MYB2.